The following is a 34-amino-acid chain: Photosystem I reaction center subunit XII (34 aa).

A helical transmembrane segment spans residues 9–29 (LIILGLIVVMHAGVLALRLGI).

It belongs to the PsaM family.

It localises to the cellular thylakoid membrane. The sequence is that of Photosystem I reaction center subunit XII from Prochlorococcus marinus subsp. pastoris (strain CCMP1986 / NIES-2087 / MED4).